The chain runs to 152 residues: UPF0178 protein YaiI (152 aa).

Belongs to the UPF0178 family.

This chain is UPF0178 protein YaiI, found in Shigella boydii serotype 18 (strain CDC 3083-94 / BS512).